A 429-amino-acid polypeptide reads, in one-letter code: Enolase (429 aa).

Glutamine 163 is a (2R)-2-phosphoglycerate binding site. Glutamate 205 acts as the Proton donor in catalysis. 3 residues coordinate Mg(2+): aspartate 242, glutamate 287, and aspartate 314. The (2R)-2-phosphoglycerate site is built by lysine 339, arginine 368, serine 369, and lysine 390. Lysine 339 acts as the Proton acceptor in catalysis.

The protein belongs to the enolase family. The cofactor is Mg(2+).

The protein resides in the cytoplasm. The protein localises to the secreted. Its subcellular location is the cell surface. It carries out the reaction (2R)-2-phosphoglycerate = phosphoenolpyruvate + H2O. The protein operates within carbohydrate degradation; glycolysis; pyruvate from D-glyceraldehyde 3-phosphate: step 4/5. In terms of biological role, catalyzes the reversible conversion of 2-phosphoglycerate (2-PG) into phosphoenolpyruvate (PEP). It is essential for the degradation of carbohydrates via glycolysis. This Cupriavidus pinatubonensis (strain JMP 134 / LMG 1197) (Cupriavidus necator (strain JMP 134)) protein is Enolase.